A 294-amino-acid chain; its full sequence is Lipoyl synthase (294 aa).

C35, C40, C46, C61, C65, C68, and S275 together coordinate [4Fe-4S] cluster. One can recognise a Radical SAM core domain in the interval 46-264; it reads CWGGGTATVM…RDQGLALGFR (219 aa).

This sequence belongs to the radical SAM superfamily. Lipoyl synthase family. [4Fe-4S] cluster serves as cofactor.

It localises to the cytoplasm. It carries out the reaction [[Fe-S] cluster scaffold protein carrying a second [4Fe-4S](2+) cluster] + N(6)-octanoyl-L-lysyl-[protein] + 2 oxidized [2Fe-2S]-[ferredoxin] + 2 S-adenosyl-L-methionine + 4 H(+) = [[Fe-S] cluster scaffold protein] + N(6)-[(R)-dihydrolipoyl]-L-lysyl-[protein] + 4 Fe(3+) + 2 hydrogen sulfide + 2 5'-deoxyadenosine + 2 L-methionine + 2 reduced [2Fe-2S]-[ferredoxin]. It functions in the pathway protein modification; protein lipoylation via endogenous pathway; protein N(6)-(lipoyl)lysine from octanoyl-[acyl-carrier-protein]: step 2/2. In terms of biological role, catalyzes the radical-mediated insertion of two sulfur atoms into the C-6 and C-8 positions of the octanoyl moiety bound to the lipoyl domains of lipoate-dependent enzymes, thereby converting the octanoylated domains into lipoylated derivatives. The polypeptide is Lipoyl synthase (Anaeromyxobacter dehalogenans (strain 2CP-C)).